The following is a 145-amino-acid chain: Large ribosomal subunit protein uL11m (145 aa).

This sequence belongs to the universal ribosomal protein uL11 family.

It is found in the mitochondrion. The chain is Large ribosomal subunit protein uL11m (RPL11) from Reclinomonas americana.